A 1247-amino-acid chain; its full sequence is ABC transporter B family member 14 (1247 aa).

Residues 48 to 337 (MFLGGLGTCI…AVPSLSAISK (290 aa)) form the ABC transmembrane type-1 1 domain. A run of 6 helical transmembrane segments spans residues 49–69 (FLGGLGTCIHGGTLPLFFVFF), 95–115 (LYLVYLGLVNLVSAWIGVACW), 172–192 (HVLRYLCQFIAGFVIGFLSVW), 196–216 (LLTLGVVPLIAIAGGGYAIVM), 277–297 (LGVGLTYSLLFCAWALLFWYA), and 315–335 (ILNVIYSGFALGQAVPSLSAI). 2 N-linked (GlcNAc...) asparagine glycosylation sites follow: N362 and N392. The region spanning 373–608 (IEFCGVSFAY…GGDYATLVNC (236 aa)) is the ABC transporter 1 domain. 407-414 (GPSGSGKS) contacts ATP. Positions 679–971 (EWLYALLGSI…TLALTPDIVK (293 aa)) constitute an ABC transmembrane type-1 2 domain. A run of 2 helical transmembrane segments spans residues 680 to 700 (WLYALLGSIGAVLAGSQPALF) and 727 to 747 (AIIFVGAGIVTAPIYILQHYF). N-linked (GlcNAc...) asparagine glycosylation is present at N780. Transmembrane regions (helical) follow at residues 807 to 824 (IVQNLSLTITALALAFFY), 830 to 850 (AVVTACFPLLIAASLTEQLFL), and 915 to 935 (LSQCLAFCSYALGLWYISVLI). An N-linked (GlcNAc...) asparagine glycan is attached at N938. The chain crosses the membrane as a helical span at residues 949–969 (FMVLLVTAYSVAETLALTPDI). One can recognise an ABC transporter 2 domain in the interval 1006 to 1242 (IEFRNVSFAY…SDGFYKKLTS (237 aa)). N1010 carries an N-linked (GlcNAc...) asparagine glycan. Residue 1041–1048 (GPSGSGKS) coordinates ATP. N1108 carries an N-linked (GlcNAc...) asparagine glycan.

This sequence belongs to the ABC transporter superfamily. ABCB family. Multidrug resistance exporter (TC 3.A.1.201) subfamily.

The protein resides in the membrane. The protein is ABC transporter B family member 14 (ABCB14) of Arabidopsis thaliana (Mouse-ear cress).